A 376-amino-acid chain; its full sequence is Cytochrome c oxidase subunit 2, mitochondrial (376 aa).

The helical transmembrane segment at 164 to 184 (IFFFLVQILVFVLWVLSRALW) threads the bilayer. Residues 185-204 (CFRSKISPIPQRIVHGTTIE) lie on the Mitochondrial matrix side of the membrane. The helical transmembrane segment at 205–225 (ILWTILPSIILMFIAIPSFTL) threads the bilayer. Residues 226–376 (LYSMDDVVVD…YGSWVSNQIQ (151 aa)) lie on the Mitochondrial intermembrane side of the membrane. Positions 309, 344, 346, 348, 352, and 355 each coordinate Cu cation. Glu-346 provides a ligand contact to Mg(2+).

This sequence belongs to the cytochrome c oxidase subunit 2 family. As to quaternary structure, component of the cytochrome c oxidase (complex IV, CIV), a multisubunit enzyme composed of a catalytic core of 3 subunits and several supernumerary subunits. The complex exists as a monomer or a dimer and forms supercomplexes (SCs) in the inner mitochondrial membrane with ubiquinol-cytochrome c oxidoreductase (cytochrome b-c1 complex, complex III, CIII). Cu cation serves as cofactor.

It is found in the mitochondrion inner membrane. It catalyses the reaction 4 Fe(II)-[cytochrome c] + O2 + 8 H(+)(in) = 4 Fe(III)-[cytochrome c] + 2 H2O + 4 H(+)(out). Its function is as follows. Component of the cytochrome c oxidase, the last enzyme in the mitochondrial electron transport chain which drives oxidative phosphorylation. The respiratory chain contains 3 multisubunit complexes succinate dehydrogenase (complex II, CII), ubiquinol-cytochrome c oxidoreductase (cytochrome b-c1 complex, complex III, CIII) and cytochrome c oxidase (complex IV, CIV), that cooperate to transfer electrons derived from NADH and succinate to molecular oxygen, creating an electrochemical gradient over the inner membrane that drives transmembrane transport and the ATP synthase. Cytochrome c oxidase is the component of the respiratory chain that catalyzes the reduction of oxygen to water. Electrons originating from reduced cytochrome c in the intermembrane space (IMS) are transferred via the dinuclear copper A center (CU(A)) of subunit 2 and heme A of subunit 1 to the active site in subunit 1, a binuclear center (BNC) formed by heme A3 and copper B (CU(B)). The BNC reduces molecular oxygen to 2 water molecules using 4 electrons from cytochrome c in the IMS and 4 protons from the mitochondrial matrix. The protein is Cytochrome c oxidase subunit 2, mitochondrial (COX2) of Vigna unguiculata (Cowpea).